A 21-amino-acid chain; its full sequence is VTVYDAEGTKVQIDGSLRVEL.

In terms of assembly, disulfide bond interactions within and between MOMP molecules and other components form high molecular-weight oligomers.

It localises to the cell outer membrane. Its function is as follows. Structural rigidity of the outer membrane of elementary bodies and porin forming, permitting diffusion of solutes through the intracellular reticulate body membrane. The sequence is that of 40 kDa major outer membrane protein from Actinobacillus pleuropneumoniae (Haemophilus pleuropneumoniae).